Here is an 874-residue protein sequence, read N- to C-terminus: Alanine--tRNA ligase (874 aa).

Zn(2+) is bound by residues His-564, His-568, Cys-665, and His-669.

The protein belongs to the class-II aminoacyl-tRNA synthetase family. It depends on Zn(2+) as a cofactor.

The protein localises to the cytoplasm. It carries out the reaction tRNA(Ala) + L-alanine + ATP = L-alanyl-tRNA(Ala) + AMP + diphosphate. Its function is as follows. Catalyzes the attachment of alanine to tRNA(Ala) in a two-step reaction: alanine is first activated by ATP to form Ala-AMP and then transferred to the acceptor end of tRNA(Ala). Also edits incorrectly charged Ser-tRNA(Ala) and Gly-tRNA(Ala) via its editing domain. This is Alanine--tRNA ligase from Delftia acidovorans (strain DSM 14801 / SPH-1).